We begin with the raw amino-acid sequence, 344 residues long: Phenylalanine--tRNA ligase alpha subunit (344 aa).

Residue Glu256 participates in Mg(2+) binding.

The protein belongs to the class-II aminoacyl-tRNA synthetase family. Phe-tRNA synthetase alpha subunit type 1 subfamily. In terms of assembly, tetramer of two alpha and two beta subunits. It depends on Mg(2+) as a cofactor.

It localises to the cytoplasm. It catalyses the reaction tRNA(Phe) + L-phenylalanine + ATP = L-phenylalanyl-tRNA(Phe) + AMP + diphosphate + H(+). This is Phenylalanine--tRNA ligase alpha subunit from Bacillus cereus (strain G9842).